The primary structure comprises 447 residues: UDP-N-acetylmuramate--L-alanine ligase (447 aa).

An ATP-binding site is contributed by 115–121; that stretch reads GAHGKTS.

This sequence belongs to the MurCDEF family.

The protein localises to the cytoplasm. It catalyses the reaction UDP-N-acetyl-alpha-D-muramate + L-alanine + ATP = UDP-N-acetyl-alpha-D-muramoyl-L-alanine + ADP + phosphate + H(+). The protein operates within cell wall biogenesis; peptidoglycan biosynthesis. Functionally, cell wall formation. The chain is UDP-N-acetylmuramate--L-alanine ligase from Streptococcus thermophilus (strain CNRZ 1066).